The chain runs to 313 residues: Apolipoprotein E (313 aa).

The signal sequence occupies residues 1-18; it reads MKVLWVALVITLLAGCQA. 8 consecutive repeat copies span residues 79–100, 101–122, 123–144, 145–166, 167–188, 189–209, 210–229, and 230–251. Positions 79-251 are 8 X 22 AA approximate tandem repeats; the sequence is VLMDETMKEV…HLEEIREQLE (173 aa). The tract at residues 157 to 167 is LDL and other lipoprotein receptors binding; the sequence is HLRKLRKRLLR. 161–164 provides a ligand contact to heparin; that stretch reads LRKR. Residues 209–286 form a lipid-binding and lipoprotein association region; that stretch reads AGTLASQTLR…SWFEPLVEDM (78 aa). 225-232 contributes to the heparin binding site; sequence HQKLRGRV. Residues 262–313 form a homooligomerization region; sequence SQIRLQAEAFQARLKSWFEPLVEDMQRQWAGLVEKVQLAMATSSTSAPSENH. The tract at residues 274 to 286 is specificity for association with VLDL; that stretch reads RLKSWFEPLVEDM.

This sequence belongs to the apolipoprotein A1/A4/E family. Homotetramer. May interact with ABCA1; functionally associated with ABCA1 in the biogenesis of HDLs. May interact with APP/A4 amyloid-beta peptide; the interaction is extremely stable in vitro but its physiological significance is unclear. May interact with MAPT. May interact with MAP2. In the cerebrospinal fluid, interacts with secreted SORL1. Interacts with PMEL; this allows the loading of PMEL luminal fragment on ILVs to induce fibril nucleation. In terms of processing, APOE exists as multiple glycosylated and sialylated glycoforms within cells and in plasma. The extent of glycosylation and sialylation are tissue and context specific. Post-translationally, glycated in plasma VLDL. Phosphorylated by FAM20C in the extracellular medium.

Its subcellular location is the secreted. It is found in the extracellular space. The protein resides in the extracellular matrix. The protein localises to the extracellular vesicle. It localises to the endosome. Its subcellular location is the multivesicular body. Functionally, APOE is an apolipoprotein, a protein associating with lipid particles, that mainly functions in lipoprotein-mediated lipid transport between organs via the plasma and interstitial fluids. APOE is a core component of plasma lipoproteins and is involved in their production, conversion and clearance. Apolipoproteins are amphipathic molecules that interact both with lipids of the lipoprotein particle core and the aqueous environment of the plasma. As such, APOE associates with chylomicrons, chylomicron remnants, very low density lipoproteins (VLDL) and intermediate density lipoproteins (IDL) but shows a preferential binding to high-density lipoproteins (HDL). It also binds a wide range of cellular receptors including the LDL receptor/LDLR and the very low-density lipoprotein receptor/VLDLR that mediate the cellular uptake of the APOE-containing lipoprotein particles. Finally, APOE also has a heparin-binding activity and binds heparan-sulfate proteoglycans on the surface of cells, a property that supports the capture and the receptor-mediated uptake of APOE-containing lipoproteins by cells. The chain is Apolipoprotein E (APOE) from Balaenoptera acutorostrata scammoni (North Pacific minke whale).